Reading from the N-terminus, the 618-residue chain is MSKVIGIDLGTTNSCVAVMEGGDPVVIANSEGARTTPSVVSFQANGERLVGQVAKRQSITNPDKTIISIKREMGTNHKVNIDGKQYTPQEISAMVLQKIKADAEAYLGETVTQAVITVPAYFNDSQRQATKDAGKIAGLEVLRIINEPTAAALAYGMDKMDTNQKIFVYDLGGGTFDVSILELGDGVFEVKATNGDTHLGGDDFDKKIIDYIADTFKADNGIDLKNDKMALQRLKEAAEKAKIELSSSTQTNINLPFITADATGPKHIDMSLTRAKFNELTQDLVDRTIEPMKKALNDAGLTINDINKVILVGGSTRIPAVQEAVKSFTGKEPSKGVNPDECVAMGAAIQAGVLTGDVKDVLLLDVTPLTLGIETLGGVATPLIERNTTIPTKKSQVFSTAADGQTSVEIHVVQGERQMAADNKTLGRFTLSGIAPAPRGVPQIEVTFDIDANGIVNVSAKDKGTGKEANITITASTNLSDDEIDKAVKEAEKFEEQDKKRKESIEIKNNADQVVYQTEKTLKDLGDKVSSEDKKAIEEKVEAVKKVKDGDDLEAIKKATEDLTQTFYGISSKIYSQNAEPGADGGANSGANPGGTTGNTDTKDDNVVDAEYKVDDDK.

Threonine 175 bears the Phosphothreonine; by autocatalysis mark. Residues 576–618 (SQNAEPGADGGANSGANPGGTTGNTDTKDDNVVDAEYKVDDDK) are disordered. The span at 583–597 (ADGGANSGANPGGTT) shows a compositional bias: gly residues. Over residues 601 to 618 (DTKDDNVVDAEYKVDDDK) the composition is skewed to basic and acidic residues.

This sequence belongs to the heat shock protein 70 family.

In terms of biological role, acts as a chaperone. The sequence is that of Chaperone protein DnaK from Clostridium kluyveri (strain NBRC 12016).